The following is a 762-amino-acid chain: Ribosome-releasing factor 2, mitochondrial (762 aa).

The N-terminal 35 residues, 1 to 35 (MLLSLTFPVLRGCTGHLVNRSLQAPRWRVTWKRSY), are a transit peptide targeting the mitochondrion. A tr-type G domain is found at 54 to 341 (SKIRNIGIMA…AITAYLPAPN (288 aa)). Residues 63–70 (AHIDAGKT), 127–131 (DTPGH), and 181–184 (NKMD) contribute to the GTP site.

It belongs to the TRAFAC class translation factor GTPase superfamily. Classic translation factor GTPase family. EF-G/EF-2 subfamily.

It is found in the mitochondrion. The enzyme catalyses GTP + H2O = GDP + phosphate + H(+). Mitochondrial GTPase that mediates the disassembly of ribosomes from messenger RNA at the termination of mitochondrial protein biosynthesis. Acts in collaboration with mrrf. GTP hydrolysis follows the ribosome disassembly and probably occurs on the ribosome large subunit. Not involved in the GTP-dependent ribosomal translocation step during translation elongation. The chain is Ribosome-releasing factor 2, mitochondrial (gfm2) from Danio rerio (Zebrafish).